The sequence spans 577 residues: Arginine--tRNA ligase (577 aa).

A 'HIGH' region motif is present at residues 122 to 132; the sequence is PNVAKEMHVGH.

The protein belongs to the class-I aminoacyl-tRNA synthetase family. In terms of assembly, monomer.

It localises to the cytoplasm. It catalyses the reaction tRNA(Arg) + L-arginine + ATP = L-arginyl-tRNA(Arg) + AMP + diphosphate. This chain is Arginine--tRNA ligase, found in Escherichia coli O6:K15:H31 (strain 536 / UPEC).